The chain runs to 494 residues: MSSYRIQGATGEWEVVIGLEVHAQVVSNAKLFSGASAAFGAEPNQSVSLVDAAMPGMLPVPNEECIRQAVKTGMALGAEINRWSRFDRKNYFYADLPQGYQISQLYHPLVGEGTITIDADEKAGIAEARTIGVERLHVEQDAGKLMHDQHPTRSYVDLNRSGVALMEIVSKPDMRSPSEAGAYLRKLRSILRYVGSCDGNMEEGSMRADVNVSVRKAGDPFGTRTETKNVNSIRFVMAAIESEANRQVDVIEGGGKIVQETRLYDPDRNETRSMRSKEDAHDYRYFPDPDLLPLELSEEFVAQCRAELPELPDAKRARYEGELGLPAYNAAVLTSDVETARWFEALLDAAGKPGAEVARAASNWLISDLFGALNRLGKAIDESPVSPRQGAELLALVADGTLSGTLAKQVFEIMLETGDDPARIVEERGLKQTSDTGAIEAVIAEVMAANADKVAEYRGGKDKLFGFFVGQTMKAMGGKANPGVVNELLKKTLG.

This sequence belongs to the GatB/GatE family. GatB subfamily. Heterotrimer of A, B and C subunits.

It catalyses the reaction L-glutamyl-tRNA(Gln) + L-glutamine + ATP + H2O = L-glutaminyl-tRNA(Gln) + L-glutamate + ADP + phosphate + H(+). The catalysed reaction is L-aspartyl-tRNA(Asn) + L-glutamine + ATP + H2O = L-asparaginyl-tRNA(Asn) + L-glutamate + ADP + phosphate + 2 H(+). In terms of biological role, allows the formation of correctly charged Asn-tRNA(Asn) or Gln-tRNA(Gln) through the transamidation of misacylated Asp-tRNA(Asn) or Glu-tRNA(Gln) in organisms which lack either or both of asparaginyl-tRNA or glutaminyl-tRNA synthetases. The reaction takes place in the presence of glutamine and ATP through an activated phospho-Asp-tRNA(Asn) or phospho-Glu-tRNA(Gln). The polypeptide is Aspartyl/glutamyl-tRNA(Asn/Gln) amidotransferase subunit B (Rhizorhabdus wittichii (strain DSM 6014 / CCUG 31198 / JCM 15750 / NBRC 105917 / EY 4224 / RW1) (Sphingomonas wittichii)).